Reading from the N-terminus, the 156-residue chain is Gamma-L-glutamyl-butirosin B gamma-glutamyl cyclotransferase (156 aa).

Y24 to L27 serves as a coordination point for substrate. E89 (proton acceptor) is an active-site residue.

Belongs to the gamma-glutamylcyclotransferase family.

It carries out the reaction gamma-L-glutamyl-butirosin B = butirosin B + 5-oxo-L-proline. Its pathway is antibiotic biosynthesis; butirosin biosynthesis. In terms of biological role, cyclotransferase that catalyzes the last step in the biosynthesis of the aminoglycoside antibiotic butirosin B. Cleaves the amide bond via transamidation using the alpha-amine of the terminal gamma-L-glutamate of the side chain, releasing it as the cyclic 5-oxoproline. This Niallia circulans (Bacillus circulans) protein is Gamma-L-glutamyl-butirosin B gamma-glutamyl cyclotransferase (btrG).